A 112-amino-acid chain; its full sequence is ATP synthase subunit c (112 aa).

Transmembrane regions (helical) follow at residues 36-56 (FSVL…AIGM) and 81-101 (MFIA…IALI).

The protein belongs to the ATPase C chain family. In terms of assembly, F-type ATPases have 2 components, F(1) - the catalytic core - and F(0) - the membrane proton channel. F(1) has five subunits: alpha(3), beta(3), gamma(1), delta(1), epsilon(1). F(0) has three main subunits: a(1), b(2) and c(10-14). The alpha and beta chains form an alternating ring which encloses part of the gamma chain. F(1) is attached to F(0) by a central stalk formed by the gamma and epsilon chains, while a peripheral stalk is formed by the delta and b chains.

It localises to the cell inner membrane. Its function is as follows. F(1)F(0) ATP synthase produces ATP from ADP in the presence of a proton or sodium gradient. F-type ATPases consist of two structural domains, F(1) containing the extramembraneous catalytic core and F(0) containing the membrane proton channel, linked together by a central stalk and a peripheral stalk. During catalysis, ATP synthesis in the catalytic domain of F(1) is coupled via a rotary mechanism of the central stalk subunits to proton translocation. Key component of the F(0) channel; it plays a direct role in translocation across the membrane. A homomeric c-ring of between 10-14 subunits forms the central stalk rotor element with the F(1) delta and epsilon subunits. This is ATP synthase subunit c from Campylobacter jejuni (strain RM1221).